The following is a 33-amino-acid chain: Beta-amanitin proprotein (33 aa).

The propeptide occupies Met-1–Pro-10. Positions Ile-11 to Pro-18 form a cross-link, cyclopeptide (Ile-Pro). The 2'-cysteinyl-6'-hydroxytryptophan sulfoxide (Trp-Cys) cross-link spans Trp-12 to Cys-16. A propeptide spanning residues Cys-19 to Ala-33 is cleaved from the precursor.

Belongs to the MSDIN fungal toxin family. Post-translationally, processed by the macrocyclase-peptidase enzyme POPB to yield a toxic cyclic decapeptide. POPB first removes 10 residues from the N-terminus. Conformational trapping of the remaining peptide forces the enzyme to release this intermediate rather than proceed to macrocyclization. The enzyme rebinds the remaining peptide in a different conformation and catalyzes macrocyclization of the N-terminal 8 residues.

In terms of biological role, toxin belonging to the bicyclic octapeptides amatoxins that acts by binding non-competitively to RNA polymerase II and greatly slowing the elongation of transcripts from target promoters. In Amanita rimosa, this protein is Beta-amanitin proprotein.